The sequence spans 597 residues: Protein IQ-DOMAIN 29 (597 aa).

The disordered stretch occupies residues 1-31 (MGKTPSPGKWIKSLLGKKSSKSSLEKGGEKL). IQ domains follow at residues 106-134 (LEEA…GITR), 135-153 (VQAV…ATYS), and 157-183 (GIVK…QKTN). The tract at residues 159-173 (VKVQALVRGKKARSS) is calmodulin-binding. The Nuclear localization signal 1 motif lies at 264–271 (KKRSFQAV). Disordered stretches follow at residues 268-379 (FQAV…KKEI) and 407-597 (LIPV…EWKR). The segment covering 289–300 (STTANSSTSRST) has biased composition (low complexity). Residues 319-329 (ELSKIENDKSK) show a composition bias toward basic and acidic residues. Residues 356-363 (HKKASLSN) carry the Nuclear localization signal 2 motif. Basic and acidic residues predominate over residues 414–463 (KESDLDKDEKSLVLDKPEQDELRTAERDDKAEEELKTAERDDSAEEKIQE). Over residues 467–480 (QISSENGNVASENT) the composition is skewed to polar residues. The span at 481–500 (KPSDRRASLPAKIENHHQDD) shows a compositional bias: basic and acidic residues. Positions 572–584 (GSMNSDRSFSSSK) are enriched in polar residues. Positions 585-597 (DIGDKSTKAEWKR) are enriched in basic and acidic residues.

It belongs to the IQD family. As to quaternary structure, binds to multiple calmodulin (CaM) in the presence of Ca(2+) and CaM-like proteins.

It is found in the nucleus. Its subcellular location is the nucleus envelope. The protein localises to the cytoplasm. It localises to the cytoskeleton. The protein resides in the cell membrane. In terms of biological role, may be involved in cooperative interactions with calmodulins or calmodulin-like proteins. Recruits calmodulin proteins to microtubules, thus being a potential scaffold in cellular signaling and trafficking. May associate with nucleic acids and regulate gene expression at the transcriptional or post-transcriptional level. This is Protein IQ-DOMAIN 29 from Arabidopsis thaliana (Mouse-ear cress).